A 285-amino-acid chain; its full sequence is Gas vesicle protein C2 (285 aa).

Tandem repeats lie at residues 22-52 (EAMD…RDMR), 53-84 (AAVD…EATA), 85-122 (AAFD…RAVT), 123-155 (TDFE…TAKQ), 156-188 (EGFE…DDTA), and 189-220 (ASFA…QTDV). Residues 22 to 220 (EAMDAYAEEF…ADDTTAQTDV (199 aa)) are 6 X approximate tandem repeats.

The protein belongs to the halobacterial gas vesicle GvpC family.

It is found in the gas vesicle. In terms of biological role, confers stability, involved in shaping gas vesicles (GV), hollow, gas filled proteinaceous nanostructures. GVs allow positioning of halobacteria at an optimal depth for growth in the poorly aerated, shallow brine pools of their habitat. Expression of 2 c-vac DNA fragments containing 2 divergently transcribed regions (gvpE-gvpF-gvpG-gvpH-gvpI-gvpJ-gvpK-gvpL-gvpM and gvpA-gvpC-gvpN-gvpO) allows H.volcanii to produce gas vesicles. This chain is Gas vesicle protein C2, found in Halobacterium salinarum (strain ATCC 700922 / JCM 11081 / NRC-1) (Halobacterium halobium).